A 525-amino-acid chain; its full sequence is cAMP-dependent protein kinase regulatory subunit (525 aa).

A dimerization and phosphorylation region spans residues glutamine 28–leucine 213. Disordered regions lie at residues methionine 114–glycine 146 and serine 170–proline 196. Positions proline 124–glycine 146 are enriched in low complexity. Serine 170 carries the phosphoserine; by autocatalysis modification. A nucleoside 3',5'-cyclic phosphate contacts are provided by residues leucine 214–aspartate 345 and leucine 348–aspartate 472. 3',5'-cyclic AMP contacts are provided by glutamate 295, arginine 304, and glutamate 417. A disordered region spans residues serine 497 to alanine 525.

Belongs to the cAMP-dependent kinase regulatory chain family. In terms of assembly, tetramer, composed of 2 regulatory (R) and 2 catalytic (C) subunits. In the presence of cAMP it dissociates into 2 active monomeric C subunits and an R dimer.

The protein is cAMP-dependent protein kinase regulatory subunit (PKAR) of Mycosarcoma maydis (Corn smut fungus).